Consider the following 353-residue polypeptide: Photosystem II D2 protein (353 aa).

N-acetylthreonine is present on Thr2. Thr2 is subject to Phosphothreonine. A helical transmembrane segment spans residues 41 to 61 (CAYFALGGWFTGTTFVTSWYT). Residue His118 participates in chlorophyll a binding. A helical transmembrane segment spans residues 125–141 (GFMLRQFELARSVQLRP). Residues Gln130 and Asn143 each coordinate pheophytin a. Residues 153 to 166 (VFVSVFLIYPLGQS) traverse the membrane as a helical segment. His198 contacts chlorophyll a. Residues 208–228 (AALLCAIHGATVENTLFEDGD) form a helical membrane-spanning segment. A plastoquinone-binding residues include His215 and Phe262. His215 serves as a coordination point for Fe cation. His269 contacts Fe cation. A helical membrane pass occupies residues 279 to 295 (GLWMSAIGVVGLALNLR).

This sequence belongs to the reaction center PufL/M/PsbA/D family. In terms of assembly, PSII is composed of 1 copy each of membrane proteins PsbA, PsbB, PsbC, PsbD, PsbE, PsbF, PsbH, PsbI, PsbJ, PsbK, PsbL, PsbM, PsbT, PsbX, PsbY, PsbZ, Psb30/Ycf12, at least 3 peripheral proteins of the oxygen-evolving complex and a large number of cofactors. It forms dimeric complexes. The D1/D2 heterodimer binds P680, chlorophylls that are the primary electron donor of PSII, and subsequent electron acceptors. It shares a non-heme iron and each subunit binds pheophytin, quinone, additional chlorophylls, carotenoids and lipids. There is also a Cl(-1) ion associated with D1 and D2, which is required for oxygen evolution. The PSII complex binds additional chlorophylls, carotenoids and specific lipids. serves as cofactor.

It localises to the plastid. Its subcellular location is the chloroplast thylakoid membrane. It catalyses the reaction 2 a plastoquinone + 4 hnu + 2 H2O = 2 a plastoquinol + O2. Photosystem II (PSII) is a light-driven water:plastoquinone oxidoreductase that uses light energy to abstract electrons from H(2)O, generating O(2) and a proton gradient subsequently used for ATP formation. It consists of a core antenna complex that captures photons, and an electron transfer chain that converts photonic excitation into a charge separation. The D1/D2 (PsbA/PsbD) reaction center heterodimer binds P680, the primary electron donor of PSII as well as several subsequent electron acceptors. D2 is needed for assembly of a stable PSII complex. This is Photosystem II D2 protein from Liriodendron tulipifera (Tuliptree).